Here is a 239-residue protein sequence, read N- to C-terminus: Fatty acid metabolism regulator protein (239 aa).

The HTH gntR-type domain maps to 6 to 74; the sequence is QSPAGFAEEY…HGKPTKVNNF (69 aa). The segment at residues 34–53 is a DNA-binding region (H-T-H motif); the sequence is ERELSELIGVTRTTLREVLQ.

Homodimer.

The protein resides in the cytoplasm. In terms of biological role, multifunctional regulator of fatty acid metabolism. The protein is Fatty acid metabolism regulator protein of Yersinia enterocolitica serotype O:8 / biotype 1B (strain NCTC 13174 / 8081).